The sequence spans 365 residues: uncharacterized protein (365 aa).

Position 31-38 (31-38 (GPINSGKT)) interacts with ATP.

This sequence belongs to the archaeal ATPase family.

This is an uncharacterized protein from Methanocaldococcus jannaschii (strain ATCC 43067 / DSM 2661 / JAL-1 / JCM 10045 / NBRC 100440) (Methanococcus jannaschii).